The following is a 337-amino-acid chain: HTH-type transcriptional regulator MalR (337 aa).

Residues 1 to 56 (MVTIKDIAQAANVSTSTVSRVISGNPRISMQTREKVKATMKSFNYQPNRAARTLAT) form the HTH lacI-type domain. Residues 4-23 (IKDIAQAANVSTSTVSRVIS) constitute a DNA-binding region (H-T-H motif).

Its function is as follows. Transcriptional repressor of the malA gene for maltase. The sequence is that of HTH-type transcriptional regulator MalR (malR) from Staphylococcus xylosus.